Consider the following 132-residue polypeptide: Small ribosomal subunit protein uS8 (132 aa).

It belongs to the universal ribosomal protein uS8 family. Part of the 30S ribosomal subunit. Contacts proteins S5 and S12.

Its function is as follows. One of the primary rRNA binding proteins, it binds directly to 16S rRNA central domain where it helps coordinate assembly of the platform of the 30S subunit. The chain is Small ribosomal subunit protein uS8 from Anaplasma marginale (strain Florida).